A 110-amino-acid chain; its full sequence is Flagellar hook-basal body complex protein FliE (110 aa).

This sequence belongs to the FliE family.

Its subcellular location is the bacterial flagellum basal body. This Pseudomonas putida (strain W619) protein is Flagellar hook-basal body complex protein FliE.